Reading from the N-terminus, the 516-residue chain is Cytochrome P450 1A2 (516 aa).

Ser69 carries an O-linked (GlcNAc) serine glycan. Residues Phe226 and 361 to 365 each bind substrate; that span reads DRPQL. Residue Cys458 coordinates heme.

The protein belongs to the cytochrome P450 family. In terms of assembly, interacts with PGRMC1; the interaction requires PGRMC1 homodimerization. Requires heme as cofactor.

The protein localises to the endoplasmic reticulum membrane. Its subcellular location is the microsome membrane. It catalyses the reaction an organic molecule + reduced [NADPH--hemoprotein reductase] + O2 = an alcohol + oxidized [NADPH--hemoprotein reductase] + H2O + H(+). The catalysed reaction is 17beta-estradiol + reduced [NADPH--hemoprotein reductase] + O2 = 2-hydroxy-17beta-estradiol + oxidized [NADPH--hemoprotein reductase] + H2O + H(+). It carries out the reaction 17beta-estradiol + reduced [NADPH--hemoprotein reductase] + O2 = 4-hydroxy-17beta-estradiol + oxidized [NADPH--hemoprotein reductase] + H2O + H(+). The enzyme catalyses estrone + reduced [NADPH--hemoprotein reductase] + O2 = 2-hydroxyestrone + oxidized [NADPH--hemoprotein reductase] + H2O + H(+). It catalyses the reaction estrone + reduced [NADPH--hemoprotein reductase] + O2 = 4-hydroxyestrone + oxidized [NADPH--hemoprotein reductase] + H2O + H(+). The catalysed reaction is cholesterol + reduced [NADPH--hemoprotein reductase] + O2 = 25-hydroxycholesterol + oxidized [NADPH--hemoprotein reductase] + H2O + H(+). It carries out the reaction all-trans-retinol + reduced [NADPH--hemoprotein reductase] + O2 = all-trans-retinal + oxidized [NADPH--hemoprotein reductase] + 2 H2O + H(+). The enzyme catalyses all-trans-retinal + reduced [NADPH--hemoprotein reductase] + O2 = all-trans-retinoate + oxidized [NADPH--hemoprotein reductase] + H2O + 2 H(+). It catalyses the reaction (5Z,8Z,11Z,14Z)-eicosatetraenoate + reduced [NADPH--hemoprotein reductase] + O2 = (14R,15S)-epoxy-(5Z,8Z,11Z)-eicosatrienoate + oxidized [NADPH--hemoprotein reductase] + H2O + H(+). The catalysed reaction is (5Z,8Z,11Z,14Z)-eicosatetraenoate + reduced [NADPH--hemoprotein reductase] + O2 = (14S,15R)-epoxy-(5Z,8Z,11Z)-eicosatrienoate + oxidized [NADPH--hemoprotein reductase] + H2O + H(+). It carries out the reaction (5Z,8Z,11Z,14Z,17Z)-eicosapentaenoate + reduced [NADPH--hemoprotein reductase] + O2 = (17R,18S)-epoxy-(5Z,8Z,11Z,14Z)-eicosatetraenoate + oxidized [NADPH--hemoprotein reductase] + H2O + H(+). The enzyme catalyses (4Z,7Z,10Z,13Z,16Z,19Z)-docosahexaenoate + reduced [NADPH--hemoprotein reductase] + O2 = (19R,20S)-epoxy-(4Z,7Z,10Z,13Z,16Z)-docosapentaenoate + oxidized [NADPH--hemoprotein reductase] + H2O + H(+). It catalyses the reaction (5S)-hydroperoxy-(6E,8Z,11Z,14Z)-eicosatetraenoate = 5-oxo-(6E,8Z,11Z,14Z)-eicosatetraenoate + H2O. The catalysed reaction is (12S)-hydroperoxy-(5Z,8Z,10E,14Z)-eicosatetraenoate = 12-oxo-(5Z,8Z,10E,14Z)-eicosatetraenoate + H2O. It carries out the reaction (15S)-hydroperoxy-(5Z,8Z,11Z,13E)-eicosatetraenoate = 15-oxo-(5Z,8Z,11Z,13E)-eicosatetraenoate + H2O. The enzyme catalyses (13S)-hydroperoxy-(9Z,11E)-octadecadienoate = 13-oxo-(9Z,11E)-octadecadienoate + H2O. It catalyses the reaction (5Z,8Z,11Z,14Z)-eicosatetraenoate + reduced [NADPH--hemoprotein reductase] + O2 = 13-hydroxy-(5Z,8Z,11Z,14Z)-eicosatetraenoate + oxidized [NADPH--hemoprotein reductase] + H2O + H(+). The catalysed reaction is (5Z,8Z,11Z,14Z)-eicosatetraenoate + reduced [NADPH--hemoprotein reductase] + O2 = 19-hydroxy-(5Z,8Z,11Z,14Z)-eicosatetraenoate + oxidized [NADPH--hemoprotein reductase] + H2O + H(+). It carries out the reaction (9Z,12Z)-octadecadienoate + reduced [NADPH--hemoprotein reductase] + O2 = 11-hydroxy-(9Z,12Z)-octadecadienoate + oxidized [NADPH--hemoprotein reductase] + H2O + H(+). Its pathway is cofactor metabolism; retinol metabolism. It participates in steroid metabolism; cholesterol metabolism. The protein operates within lipid metabolism; arachidonate metabolism. A cytochrome P450 monooxygenase involved in the metabolism of various endogenous substrates, including fatty acids, steroid hormones and vitamins. Mechanistically, uses molecular oxygen inserting one oxygen atom into a substrate, and reducing the second into a water molecule, with two electrons provided by NADPH via cytochrome P450 reductase (NADPH--hemoprotein reductase). Catalyzes the hydroxylation of carbon-hydrogen bonds. Exhibits high catalytic activity for the formation of hydroxyestrogens from estrone (E1) and 17beta-estradiol (E2), namely 2-hydroxy E1 and E2. Metabolizes cholesterol toward 25-hydroxycholesterol, a physiological regulator of cellular cholesterol homeostasis. May act as a major enzyme for all-trans retinoic acid biosynthesis in the liver. Catalyzes two successive oxidative transformation of all-trans retinol to all-trans retinal and then to the active form all-trans retinoic acid. Primarily catalyzes stereoselective epoxidation of the last double bond of polyunsaturated fatty acids (PUFA), displaying a strong preference for the (R,S) stereoisomer. Catalyzes bisallylic hydroxylation and omega-1 hydroxylation of PUFA. May also participate in eicosanoids metabolism by converting hydroperoxide species into oxo metabolites (lipoxygenase-like reaction, NADPH-independent). Plays a role in the oxidative metabolism of xenobiotics. Catalyzes the N-hydroxylation of heterocyclic amines and the O-deethylation of phenacetin. Metabolizes caffeine via N3-demethylation. The sequence is that of Cytochrome P450 1A2 (CYP1A2) from Oryctolagus cuniculus (Rabbit).